The primary structure comprises 256 residues: tRNA-cytidine(32) 2-sulfurtransferase 1 (256 aa).

Positions 38 to 43 (SGGKDS) match the PP-loop motif motif. C113, C116, and C204 together coordinate [4Fe-4S] cluster.

This sequence belongs to the TtcA family. In terms of assembly, homodimer. Requires Mg(2+) as cofactor. [4Fe-4S] cluster serves as cofactor.

Its subcellular location is the cytoplasm. The catalysed reaction is cytidine(32) in tRNA + S-sulfanyl-L-cysteinyl-[cysteine desulfurase] + AH2 + ATP = 2-thiocytidine(32) in tRNA + L-cysteinyl-[cysteine desulfurase] + A + AMP + diphosphate + H(+). The protein operates within tRNA modification. In terms of biological role, catalyzes the ATP-dependent 2-thiolation of cytidine in position 32 of tRNA, to form 2-thiocytidine (s(2)C32). The sulfur atoms are provided by the cysteine/cysteine desulfurase (IscS) system. This Francisella philomiragia subsp. philomiragia (strain ATCC 25017 / CCUG 19701 / FSC 153 / O#319-036) protein is tRNA-cytidine(32) 2-sulfurtransferase 1.